Reading from the N-terminus, the 788-residue chain is Response regulator SSK1 (788 aa).

The Response regulatory domain maps to 534 to 691; it reads NVLIVEDNII…WLERKVKEWG (158 aa). Position 583 is a 4-aspartylphosphate (Asp583).

This sequence belongs to the SSK1 family.

The protein localises to the cytoplasm. In terms of biological role, two-domain response regulator protein in the two-component signal transduction system of the HOG1 pathway. Controls high-osmolarity adaptation and fungicide sensitivity via its regulation of the phosphorylation of HOG1. This Cochliobolus heterostrophus (strain C5 / ATCC 48332 / race O) (Southern corn leaf blight fungus) protein is Response regulator SSK1.